Reading from the N-terminus, the 204-residue chain is Leucyl/phenylalanyl-tRNA--protein transferase (204 aa).

This sequence belongs to the L/F-transferase family.

The protein localises to the cytoplasm. The enzyme catalyses N-terminal L-lysyl-[protein] + L-leucyl-tRNA(Leu) = N-terminal L-leucyl-L-lysyl-[protein] + tRNA(Leu) + H(+). It catalyses the reaction N-terminal L-arginyl-[protein] + L-leucyl-tRNA(Leu) = N-terminal L-leucyl-L-arginyl-[protein] + tRNA(Leu) + H(+). The catalysed reaction is L-phenylalanyl-tRNA(Phe) + an N-terminal L-alpha-aminoacyl-[protein] = an N-terminal L-phenylalanyl-L-alpha-aminoacyl-[protein] + tRNA(Phe). In terms of biological role, functions in the N-end rule pathway of protein degradation where it conjugates Leu, Phe and, less efficiently, Met from aminoacyl-tRNAs to the N-termini of proteins containing an N-terminal arginine or lysine. This Agrobacterium fabrum (strain C58 / ATCC 33970) (Agrobacterium tumefaciens (strain C58)) protein is Leucyl/phenylalanyl-tRNA--protein transferase.